The chain runs to 349 residues: MIEFDNLTYLHGKPQGTGLLKANPEDFVVVEDLGFEPDGEGEHILVRILKNGCNTRFVADALAKFLKIHAREVSFAGQKDKHAVTEQWLCARVPGKEMPDLSAFQLEGCQVLEYARHKRKLRLGALKGNAFTLVLREVSNRDDVEQRLIDICVKGVPNYFGAQRFGIGGSNLQGALRWAQTNTPVRDRNKRSFWLSAARSALFNQIVAERLKKADVNQVVDGDALQLAGRGSWFVATTEELAELQRRVNDKELMITAALPGSGEWGTQREALAFEQAAVAAETELQALLVREKVEAARRAMLLYPQQFSWNWWDDVTVEIRFWLPAGSFATSVVRELINTTGDYAHIAE.

Residue phenylalanine 27 coordinates substrate. The Nucleophile role is filled by aspartate 80. Residue asparagine 129 coordinates substrate. The 149-residue stretch at 155–303 (GVPNYFGAQR…VEAARRAMLL (149 aa)) folds into the TRUD domain. Phenylalanine 329 is a binding site for substrate.

Belongs to the pseudouridine synthase TruD family.

The catalysed reaction is uridine(13) in tRNA = pseudouridine(13) in tRNA. In terms of biological role, responsible for synthesis of pseudouridine from uracil-13 in transfer RNAs. This is tRNA pseudouridine synthase D from Escherichia coli O8 (strain IAI1).